We begin with the raw amino-acid sequence, 965 residues long: SKI family transcriptional corepressor 1 (965 aa).

6 disordered regions span residues 45 to 72 (TQLG…SSAL), 278 to 367 (RTFS…GGGA), 410 to 458 (DDPV…GGGA), 530 to 592 (SGAP…GSYV), 615 to 777 (AYGA…FAPE), and 796 to 843 (VCTP…EDGL). Gly residues-rich tracts occupy residues 283 to 312 (QGGG…GPGC), 356 to 367 (GPAGPGGPGGGA), and 418 to 442 (EPKG…GGPG). The segment covering 571 to 586 (LPPPLAPLPPPPPPPA) has biased composition (pro residues). The segment covering 620-632 (PARGPGPGAGSGG) has biased composition (gly residues). Residues 641 to 650 (EGSSSYNSAS) are compositionally biased toward polar residues. Acidic residues-rich tracts occupy residues 654 to 663 (DTADEPEVDV) and 670 to 679 (DDEDAQEETE). A compositionally biased stretch (basic and acidic residues) spans 800-823 (EAHEPDKEDNHSPADDLETRKSYP). Over residues 824–835 (DQRSISQPSPAN) the composition is skewed to polar residues. The stretch at 858–922 (ENLAREELQK…DTLCNELDQE (65 aa)) forms a coiled coil.

It belongs to the SKI family. Interacts with LBX1. Interacts with SMAD1, SMAD2 and SMAD3. As to expression, present specifically in cerebellar Purkinje cells (at protein level).

It is found in the nucleus. Acts as a transcriptional corepressor of LBX1. Inhibits BMP signaling. The protein is SKI family transcriptional corepressor 1 (SKOR1) of Homo sapiens (Human).